The following is a 3432-amino-acid chain: Hybrid signal transduction histidine kinase G (3432 aa).

Low complexity-rich tracts occupy residues 44–68, 76–90, and 126–145; these read HFSN…TTTN, SQLQ…QQNN, and QPQQ…SQKQ. 2 disordered regions span residues 44–109 and 124–240; these read HFSN…TNSS and DDQP…HNIN. Polar residues predominate over residues 146–157; it reads TSQLNISGNNSG. 2 stretches are compositionally biased toward low complexity: residues 165–177 and 187–238; these read TISN…NFIH and KTPI…NNHN. The 530-residue stretch at 263–792 folds into the Protein kinase domain; sequence LSFKHGYNSG…YGLKKDLEMF (530 aa). ATP-binding positions include 269-277 and Lys-305; that span reads YNSGLGGNF. The segment covering 399-419 has biased composition (low complexity); the sequence is NNNNNNNNSYNNNYNNNNNNN. Disordered regions lie at residues 399–426 and 443–542; these read NNNN…TSPI and FQLN…STPL. A compositionally biased stretch (polar residues) spans 443-467; the sequence is FQLNSSTNSTGSPLIITSQPMPFQL. Over residues 468-479 the composition is skewed to low complexity; the sequence is NSNSNTTASSSS. A compositionally biased stretch (polar residues) spans 480-490; it reads PITHSNLNTAI. The span at 491-508 shows a compositional bias: low complexity; that stretch reads TSTTTSNSNSNNNSNNNN. Positions 509–525 are enriched in gly residues; the sequence is SGGGGGGGGGGGGGGGT. Catalysis depends on Asp-585, which acts as the Proton acceptor; for protein kinase activity. Residues 863–1121 are AAA; that stretch reads GKEFIIVSGL…TMKIVLKNLD (259 aa). ATP is bound at residue 871 to 878; the sequence is GLSGVGKT. Disordered regions lie at residues 1040 to 1077 and 1261 to 1290; these read NNFS…NNNI and TTTT…NNSD. A compositionally biased stretch (low complexity) spans 1261-1288; that stretch reads TTTTNNNTTNNTNNNNTNNNNNNTNGNN. Transmembrane regions (helical) follow at residues 1567–1587 and 1599–1619; these read VMVI…TLLL and ISSW…IGHF. A TPR repeat occupies 1965–1998; sequence SQLMLAKAEFERINGNFEQAMEYFSEAISLAQQF. 2 disordered regions span residues 2071–2095 and 2299–2349; these read EYSN…QASI and GYNN…NNNK. Residues 2073–2095 are compositionally biased toward low complexity; sequence SNNNNNNNSNNNNNNANQSQASI. The 251-residue stretch at 2215-2465 folds into the GAF domain; the sequence is YFDRLLKRLM…SNARLFIKVN (251 aa). One can recognise a Histidine kinase domain in the interval 2491-2769; sequence NMSHEMRTPL…TFHFCVELGK (279 aa). His-2494 bears the Phosphohistidine; by autocatalysis mark. The segment covering 2637–2648 has biased composition (low complexity); it reads TTTNNKKQLNTD. Disordered regions lie at residues 2637–2673, 2785–2815, 2917–3030, 3134–3160, and 3247–3281; these read TTTN…SIDL, LLNN…NNNN, LSPK…NNNS, NNNI…HSQY, and NSIS…TITT. Residues 2649–2673 show a composition bias toward acidic residues; it reads NDGDDDDDDDNENLDENNEDTSIDL. Low complexity-rich tracts occupy residues 2787–2815, 2935–3029, and 3134–3145; these read NNNN…NNNN, LSSS…HNNN, and NNNINNINNNNN. The Response regulatory domain maps to 3305–3424; that stretch reads KILIVEDNEM…DLRYVINRYG (120 aa). At Asp-3356 the chain carries 4-aspartylphosphate.

The protein belongs to the protein kinase superfamily. Ser/Thr protein kinase family. Post-translationally, activation probably requires transfer of a phosphate group between a histidine in the kinase core (transmitter) domain and an aspartate of the receiver domain.

The protein localises to the membrane. It carries out the reaction ATP + protein L-histidine = ADP + protein N-phospho-L-histidine.. The enzyme catalyses L-seryl-[protein] + ATP = O-phospho-L-seryl-[protein] + ADP + H(+). It catalyses the reaction L-threonyl-[protein] + ATP = O-phospho-L-threonyl-[protein] + ADP + H(+). Its function is as follows. Acts as a receptor histidine kinase for a signal transduction pathway. This protein undergoes an ATP-dependent autophosphorylation at a conserved histidine residue in the kinase core, and a phosphoryl group is then transferred to a conserved aspartate residue in the receiver domain. The protein is Hybrid signal transduction histidine kinase G (dhkG) of Dictyostelium discoideum (Social amoeba).